A 175-amino-acid chain; its full sequence is Putative FAS1 domain-containing protein 081L (175 aa).

Residues 28 to 172 form the FAS1 domain; sequence GPIVPSVWTI…GLVHIVDQFP (145 aa).

This is Putative FAS1 domain-containing protein 081L from Invertebrate iridescent virus 3 (IIV-3).